Consider the following 63-residue polypeptide: uncharacterized protein (63 aa).

A helical membrane pass occupies residues 4–24 (LNQFILIFLLLIVILFIFFLI).

It is found in the membrane. This is an uncharacterized protein from Invertebrate iridescent virus 6 (IIV-6).